We begin with the raw amino-acid sequence, 168 residues long: MIGQVLSNDDWNRYKKEGFLVTKFGSLIDYVINWARSGSLWPMTFGLACCAVEMMHTASSRYDLDRYGIMFRASPRQADVMIVAGTLTNKMAAALRKVYDQMADPKYVVSMGSCANGGGYYHYSYSVVRGCDRIVPVDIYVPGCPPTAEALLYGMLCLQNKIKRTQNI.

[4Fe-4S] cluster contacts are provided by cysteine 49, cysteine 50, cysteine 114, and cysteine 144.

This sequence belongs to the complex I 20 kDa subunit family. As to quaternary structure, NDH-1 is composed of 14 different subunits. Subunits NuoB, C, D, E, F, and G constitute the peripheral sector of the complex. [4Fe-4S] cluster is required as a cofactor.

The protein localises to the cell membrane. The catalysed reaction is a quinone + NADH + 5 H(+)(in) = a quinol + NAD(+) + 4 H(+)(out). In terms of biological role, NDH-1 shuttles electrons from NADH, via FMN and iron-sulfur (Fe-S) centers, to quinones in the respiratory chain. Couples the redox reaction to proton translocation (for every two electrons transferred, four hydrogen ions are translocated across the cytoplasmic membrane), and thus conserves the redox energy in a proton gradient. The protein is NADH-quinone oxidoreductase subunit B of Wolbachia sp. subsp. Brugia malayi (strain TRS).